Consider the following 303-residue polypeptide: Protoporphyrin uptake protein 1 (303 aa).

Topologically, residues 1–18 are extracellular; the sequence is MSTTDSGFVLYHYTPSKA. The chain crosses the membrane as a helical span at residues 19 to 39; the sequence is AAIVFVVLFIIMTVIFAVQTL. The Cytoplasmic segment spans residues 40–76; the sequence is YAARKSSKALKNNPFESSDDKVDSLEDAEYKQLKITP. A helical transmembrane segment spans residues 77–97; the sequence is TVFAFIPFFTGCIMEAVGYIG. Topologically, residues 98–111 are extracellular; sequence RALSSSNPERTTPY. The helical transmembrane segment at 112-132 threads the bilayer; sequence IIQSVLLLVAPALIAATIYMI. The Cytoplasmic segment spans residues 133-154; that stretch reads FGRLLHVMRCQSLILISARFGT. The chain crosses the membrane as a helical span at residues 155–175; sequence TFFVVGDVFSFFLQAAGGGLM. The Extracellular portion of the chain corresponds to 176–183; it reads SKAGSTKT. The helical transmembrane segment at 184–204 threads the bilayer; that stretch reads GSGLITAGLFVQVIFFGFFII. Over 205–226 the chain is Cytoplasmic; the sequence is NEIRFTVNVKRRCLFYEDISRK. A helical membrane pass occupies residues 227–247; the sequence is WIFVNATLLLSSMLILLRSIV. Residues 248–264 lie on the Extracellular side of the membrane; the sequence is RIVEFIQGFNGYIISHE. A helical transmembrane segment spans residues 265–285; it reads YFIYVFDAVPMLLVIIAFSVG. Residues 286–303 lie on the Cytoplasmic side of the membrane; sequence SFFGNVFDVIKECQTLSN.

It belongs to the lipid-translocating exporter (LTE) (TC 9.A.26.1) family. N-glycosylated.

The protein localises to the cell membrane. In terms of biological role, involved in inducible protoporphyrin IX influx and heme efflux. The protein is Protoporphyrin uptake protein 1 (PUG1) of Saccharomyces cerevisiae (strain ATCC 204508 / S288c) (Baker's yeast).